The primary structure comprises 685 residues: Sulfate transporter 4.1, chloroplastic (685 aa).

A chloroplast-targeting transit peptide spans 1–23 (MSYASLSVKDLTSLVSRSGTGSS). The span at 15 to 26 (VSRSGTGSSSSL) shows a compositional bias: low complexity. The disordered stretch occupies residues 15 to 53 (VSRSGTGSSSSLKPPGQTRPVKVIPLQHPDTSNEARPPS). Helical transmembrane passes span 97-117 (LDLM…MSYA), 122-142 (LPPI…AIFG), 147-167 (LAIG…GGIA), 175-195 (IELA…MGLL), 203-223 (FISH…IGLS), 255-275 (WPPF…KHVG), 283-303 (FLRA…AKVF), 332-352 (TLLP…VGIA), 369-389 (LFGL…PATG), 406-426 (LSGL…TPMF), 434-454 (LAAI…AIFL), and 473-493 (LFFG…AFVI). Positions 518–642 (QYPEAYTYNG…VRVHDAVQVC (125 aa)) constitute an STAS domain.

It belongs to the SLC26A/SulP transporter (TC 2.A.53) family. Expressed both in roots and leaves.

It is found in the plastid. It localises to the chloroplast membrane. Functionally, h(+)/sulfate cotransporter that may play a role in the regulation of sulfate assimilation. This Arabidopsis thaliana (Mouse-ear cress) protein is Sulfate transporter 4.1, chloroplastic (SULTR4;1).